A 203-amino-acid polypeptide reads, in one-letter code: Guanylate kinase (203 aa).

The Guanylate kinase-like domain maps to 3-181 (GTLYIVSAPS…ALDDLKAIFR (179 aa)). 10 to 17 (APSGAGKT) contributes to the ATP binding site.

Belongs to the guanylate kinase family.

The protein resides in the cytoplasm. It catalyses the reaction GMP + ATP = GDP + ADP. In terms of biological role, essential for recycling GMP and indirectly, cGMP. The sequence is that of Guanylate kinase (gmk) from Pseudomonas aeruginosa (strain ATCC 15692 / DSM 22644 / CIP 104116 / JCM 14847 / LMG 12228 / 1C / PRS 101 / PAO1).